Here is a 379-residue protein sequence, read N- to C-terminus: Homoserine O-succinyltransferase (379 aa).

An AB hydrolase-1 domain is found at 51–360 (NAVLICHALS…DAPQGHDAFL (310 aa)). The active-site Nucleophile is the S157. R227 is a substrate binding site. Active-site residues include D323 and H356. D357 contacts substrate.

This sequence belongs to the AB hydrolase superfamily. MetX family. Homodimer.

The protein resides in the cytoplasm. The catalysed reaction is L-homoserine + succinyl-CoA = O-succinyl-L-homoserine + CoA. Its pathway is amino-acid biosynthesis; L-methionine biosynthesis via de novo pathway; O-succinyl-L-homoserine from L-homoserine: step 1/1. In terms of biological role, transfers a succinyl group from succinyl-CoA to L-homoserine, forming succinyl-L-homoserine. In Pseudomonas fluorescens (strain SBW25), this protein is Homoserine O-succinyltransferase.